A 354-amino-acid polypeptide reads, in one-letter code: Uroporphyrinogen decarboxylase (354 aa).

Substrate contacts are provided by residues Arg-27–Arg-31, Asp-77, Tyr-154, Ser-209, and His-327.

Belongs to the uroporphyrinogen decarboxylase family. Homodimer.

The protein resides in the cytoplasm. The enzyme catalyses uroporphyrinogen III + 4 H(+) = coproporphyrinogen III + 4 CO2. It participates in porphyrin-containing compound metabolism; protoporphyrin-IX biosynthesis; coproporphyrinogen-III from 5-aminolevulinate: step 4/4. Catalyzes the decarboxylation of four acetate groups of uroporphyrinogen-III to yield coproporphyrinogen-III. The sequence is that of Uroporphyrinogen decarboxylase from Shewanella sp. (strain ANA-3).